A 145-amino-acid chain; its full sequence is 3-hydroxyacyl-[acyl-carrier-protein] dehydratase FabZ (145 aa).

His-51 is an active-site residue.

Belongs to the thioester dehydratase family. FabZ subfamily.

The protein resides in the cytoplasm. It carries out the reaction a (3R)-hydroxyacyl-[ACP] = a (2E)-enoyl-[ACP] + H2O. In terms of biological role, involved in unsaturated fatty acids biosynthesis. Catalyzes the dehydration of short chain beta-hydroxyacyl-ACPs and long chain saturated and unsaturated beta-hydroxyacyl-ACPs. The protein is 3-hydroxyacyl-[acyl-carrier-protein] dehydratase FabZ of Macrococcus caseolyticus (strain JCSC5402) (Macrococcoides caseolyticum).